We begin with the raw amino-acid sequence, 146 residues long: MLLCDTNIWLALALSGHVHHRASRAWLDTINAPGVIHFCRATQQSLLRLLTNRTVLGAYGSPPLTNREAWAAYAAFLDDDRIVLAGAEPDGLEAQWRAFAVRQSPAPKVWMDAYLAAFALTGGFELVTTDTAFTQYGGIELRLLAK.

Residues 3-142 (LCDTNIWLAL…FTQYGGIELR (140 aa)) form the PINc domain. The Mg(2+) site is built by D5 and D112.

This sequence belongs to the PINc/VapC protein family. Mg(2+) is required as a cofactor.

In terms of biological role, toxic component of a type II toxin-antitoxin (TA) system. An RNase. Its toxic effect is neutralized by coexpression with cognate antitoxin VapB41. In Mycobacterium tuberculosis (strain CDC 1551 / Oshkosh), this protein is Ribonuclease VapC41.